The following is a 184-amino-acid chain: CASP-like protein 1U1 (184 aa).

Over 1 to 30 the chain is Cytoplasmic; it reads MSSTGTTLSASEGDKGFRNGAAPAKSKSHS. The helical transmembrane segment at 31–51 threads the bilayer; sequence TIALLRLLAFAATLSAFVTMI. The Extracellular segment spans residues 52–76; the sequence is TNKQKITIGPFTRWSKWHYSDAFMW. Residues 77-97 traverse the membrane as a helical segment; that stretch reads FVVANCIAFIYLLFAAILGLI. Over 98–111 the chain is Cytoplasmic; it reads SHSPMLVKHLVILD. A helical membrane pass occupies residues 112–132; sequence LIVSYMLFSAASAATAVAYIG. The Extracellular segment spans residues 133 to 154; it reads KNGISQPGWTAICGVFERYCHH. A helical transmembrane segment spans residues 155-175; sequence VAGALVACFLGWLFLTIAVFL. Topologically, residues 176-184 are cytoplasmic; it reads GMRRSPAAV.

Belongs to the Casparian strip membrane proteins (CASP) family. Homodimer and heterodimers.

It localises to the cell membrane. The sequence is that of CASP-like protein 1U1 from Marchantia polymorpha (Common liverwort).